The following is a 129-amino-acid chain: Small ribosomal subunit protein uS11 (129 aa).

The protein belongs to the universal ribosomal protein uS11 family. In terms of assembly, part of the 30S ribosomal subunit. Interacts with proteins S7 and S18. Binds to IF-3.

Functionally, located on the platform of the 30S subunit, it bridges several disparate RNA helices of the 16S rRNA. Forms part of the Shine-Dalgarno cleft in the 70S ribosome. This is Small ribosomal subunit protein uS11 from Desulforamulus reducens (strain ATCC BAA-1160 / DSM 100696 / MI-1) (Desulfotomaculum reducens).